Consider the following 241-residue polypeptide: Uridylate kinase (241 aa).

12 to 15 is an ATP binding site; sequence KLSG. Glycine 54 contacts UMP. Residues glycine 55 and arginine 59 each contribute to the ATP site. UMP is bound by residues aspartate 74 and 135-142; that span reads VGAPYFTT. 3 residues coordinate ATP: threonine 162, tyrosine 168, and aspartate 171.

It belongs to the UMP kinase family. Homohexamer.

It is found in the cytoplasm. The catalysed reaction is UMP + ATP = UDP + ADP. Its pathway is pyrimidine metabolism; CTP biosynthesis via de novo pathway; UDP from UMP (UMPK route): step 1/1. Inhibited by UTP. In terms of biological role, catalyzes the reversible phosphorylation of UMP to UDP. In Sphingopyxis alaskensis (strain DSM 13593 / LMG 18877 / RB2256) (Sphingomonas alaskensis), this protein is Uridylate kinase.